An 883-amino-acid chain; its full sequence is Putative GTP diphosphokinase RSH1, chloroplastic (883 aa).

The transit peptide at 1–55 (MTSASSMSVSVECVNICNLTKGDGNARSDCSALSCAWKAPRALTGFLASTAHPPV) directs the protein to the chloroplast. The region spanning 172 to 279 (FIIHPVAVAR…VKLADRLHNM (108 aa)) is the HD domain. The region spanning 562–625 (LGSRVFVFTP…ENAEVVEIVT (64 aa)) is the TGS domain. Positions 710–726 (QSQDKSRDTTPAPQNGS) are enriched in polar residues. The interval 710-746 (QSQDKSRDTTPAPQNGSVWAPKVNGKHNKAIKNSSSD) is disordered. Residues 796 to 867 (WLCVVSMDRK…LVLGVLGWSS (72 aa)) enclose the ACT domain.

It belongs to the RelA/SpoT family. In terms of assembly, interacts with RPP5.

It localises to the plastid. The protein resides in the chloroplast. It carries out the reaction GTP + ATP = guanosine 3'-diphosphate 5'-triphosphate + AMP. Its function is as follows. May be involved in a rapid plant ppGpp (guanosine 3'-diphosphate 5'-diphosphate)-mediated response to pathogens and other stresses. The protein is Putative GTP diphosphokinase RSH1, chloroplastic (RSH1) of Arabidopsis thaliana (Mouse-ear cress).